A 233-amino-acid chain; its full sequence is Ras-related protein RABA6a (233 aa).

A GTP-binding site is contributed by 20–27 (GDSAVGKS). Positions 42-50 (SKPTIGVEF) match the Effector region motif. GTP contacts are provided by residues 68–72 (DTAGQ), 126–129 (NKSD), and 156–157 (SA). Residues Cys230 and Cys231 are each lipidated (S-geranylgeranyl cysteine).

The protein belongs to the small GTPase superfamily. Rab family.

It localises to the cell membrane. Intracellular vesicle trafficking and protein transport. The protein is Ras-related protein RABA6a (RABA6A) of Arabidopsis thaliana (Mouse-ear cress).